A 403-amino-acid polypeptide reads, in one-letter code: Synaptotagmin-7 (403 aa).

At 1 to 16 (MYRDPEAASPGAPTRD) the chain is on the vesicular side. The chain crosses the membrane as a helical span at residues 17 to 37 (VLLVSAIITVSLSVTIVLCGL). Over 38 to 403 (CHWCQRKLGK…PVAQWHQLKA (366 aa)) the chain is Cytoplasmic. Ser-52 bears the Phosphoserine mark. The segment at 53–103 (LETVGTPDSGRGRGEKKAIKLPAGGKAVNTAPVPGQTPHDESDRRTETRSS) is disordered. The residue at position 58 (Thr-58) is a Phosphothreonine. Ser-61 is modified (phosphoserine). Basic and acidic residues predominate over residues 90–100 (PHDESDRRTET). Phosphoserine is present on residues Ser-119 and Ser-122. C2 domains follow at residues 135–255 (NLGR…TFWK) and 266–399 (SRGE…AQWH). Asp-166 is a binding site for Ca(2+). Residues Gly-169 and Ser-171 each carry the asymmetric dimethylarginine modification. Ca(2+)-binding residues include Asp-172, Asp-225, Asp-227, Ser-230, Asp-233, Asp-297, Asp-303, Asp-357, Asp-359, Ser-362, and Asp-365.

Belongs to the synaptotagmin family. As to quaternary structure, homodimer. Can also form heterodimers with SYT6, SYT9 and SYT10. Interacts with calmodulin (CALM1, CALM2 or CALM3). Interacts with CD63; required for localization to lysosomes. Interacts with APP. Ca(2+) is required as a cofactor. Palmitoylated at its vesicular N-terminus; palmitoylation is required for localization to lysosome and phagocytosis in macrophages. Widely expressed. Expressed in insulin-secreting cells. Present in glucagon-secreting cells (at protein level).

The protein resides in the cell membrane. Its subcellular location is the presynaptic cell membrane. It localises to the cytoplasmic vesicle. It is found in the secretory vesicle. The protein localises to the synaptic vesicle membrane. The protein resides in the lysosome membrane. Its subcellular location is the phagosome membrane. It localises to the peroxisome membrane. It is found in the secretory vesicle membrane. Ca(2+) sensor involved in Ca(2+)-dependent exocytosis of secretory and synaptic vesicles through Ca(2+) and phospholipid binding to the C2 domain. Ca(2+) induces binding of the C2-domains to phospholipid membranes and to assembled SNARE-complexes; both actions contribute to triggering exocytosis. SYT7 binds Ca(2+) with high affinity and slow kinetics compared to other synaptotagmins. Involved in Ca(2+)-triggered lysosomal exocytosis, a major component of the plasma membrane repair. Ca(2+)-regulated delivery of lysosomal membranes to the cell surface is also involved in the phagocytic uptake of particles by macrophages. Ca(2+)-triggered lysosomal exocytosis also plays a role in bone remodeling by regulating secretory pathways in osteoclasts and osteoblasts. Involved in cholesterol transport from lysosome to peroxisome by promoting membrane contacts between lysosomes and peroxisomes: probably acts by promoting vesicle fusion by binding phosphatidylinositol-4,5-bisphosphate on peroxisomal membranes. Acts as a key mediator of synaptic facilitation, a process also named short-term synaptic potentiation: synaptic facilitation takes place at synapses with a low initial release probability and is caused by influx of Ca(2+) into the axon terminal after spike generation, increasing the release probability of neurotransmitters. Probably mediates synaptic facilitation by directly increasing the probability of release. May also contribute to synaptic facilitation by regulating synaptic vesicle replenishment, a process required to ensure that synaptic vesicles are ready for the arrival of the next action potential: SYT7 is required for synaptic vesicle replenishment by acting as a sensor for Ca(2+) and by forming a complex with calmodulin. Also acts as a regulator of Ca(2+)-dependent insulin and glucagon secretion in beta-cells. Triggers exocytosis by promoting fusion pore opening and fusion pore expansion in chromaffin cells. Also regulates the secretion of some non-synaptic secretory granules of specialized cells. This is Synaptotagmin-7 from Mus musculus (Mouse).